A 178-amino-acid chain; its full sequence is Large ribosomal subunit protein uL6 (178 aa).

The protein belongs to the universal ribosomal protein uL6 family. As to quaternary structure, part of the 50S ribosomal subunit.

In terms of biological role, this protein binds to the 23S rRNA, and is important in its secondary structure. It is located near the subunit interface in the base of the L7/L12 stalk, and near the tRNA binding site of the peptidyltransferase center. The chain is Large ribosomal subunit protein uL6 from Aliarcobacter butzleri (strain RM4018) (Arcobacter butzleri).